Consider the following 342-residue polypeptide: Glucokinase (342 aa).

Position 18 to 23 (glycine 18 to threonine 23) interacts with ATP.

It belongs to the bacterial glucokinase family.

The protein resides in the cytoplasm. The enzyme catalyses D-glucose + ATP = D-glucose 6-phosphate + ADP + H(+). The sequence is that of Glucokinase from Chelativorans sp. (strain BNC1).